The chain runs to 337 residues: 5-dehydro-2-deoxygluconokinase (337 aa).

Belongs to the carbohydrate kinase PfkB family.

The catalysed reaction is 5-dehydro-2-deoxy-D-gluconate + ATP = 6-phospho-5-dehydro-2-deoxy-D-gluconate + ADP + H(+). The protein operates within polyol metabolism; myo-inositol degradation into acetyl-CoA; acetyl-CoA from myo-inositol: step 5/7. Its function is as follows. Catalyzes the phosphorylation of 5-dehydro-2-deoxy-D-gluconate (2-deoxy-5-keto-D-gluconate or DKG) to 6-phospho-5-dehydro-2-deoxy-D-gluconate (DKGP). This is 5-dehydro-2-deoxygluconokinase from Geobacillus thermodenitrificans (strain NG80-2).